Here is a 64-residue protein sequence, read N- to C-terminus: Large ribosomal subunit protein uL29 (64 aa).

Belongs to the universal ribosomal protein uL29 family.

The protein is Large ribosomal subunit protein uL29 of Burkholderia mallei (strain NCTC 10247).